The sequence spans 168 residues: Peptide deformylase 1 (168 aa).

Residues C91 and H133 each contribute to the Fe cation site. Residue E134 is part of the active site. H137 is a Fe cation binding site.

This sequence belongs to the polypeptide deformylase family. The cofactor is Fe(2+).

It carries out the reaction N-terminal N-formyl-L-methionyl-[peptide] + H2O = N-terminal L-methionyl-[peptide] + formate. Its function is as follows. Removes the formyl group from the N-terminal Met of newly synthesized proteins. Requires at least a dipeptide for an efficient rate of reaction. N-terminal L-methionine is a prerequisite for activity but the enzyme has broad specificity at other positions. This is Peptide deformylase 1 from Shewanella oneidensis (strain ATCC 700550 / JCM 31522 / CIP 106686 / LMG 19005 / NCIMB 14063 / MR-1).